Consider the following 403-residue polypeptide: Acetyl-CoA acetyltransferase 2 (403 aa).

Residue Cys97 is the Acyl-thioester intermediate of the active site. Lys237 provides a ligand contact to CoA. Position 254 (Ala254) interacts with K(+). Residue Ser258 participates in CoA binding. Val355 contributes to the K(+) binding site. Active-site proton acceptor residues include His359 and Cys389.

It belongs to the thiolase-like superfamily. Thiolase family. Expressed in root tips, emerging leaves, young leaves, stems, and anthers at the microspore stage.

The protein localises to the cytoplasm. The protein resides in the peroxisome. The enzyme catalyses 2 acetyl-CoA = acetoacetyl-CoA + CoA. The protein operates within metabolic intermediate biosynthesis; (R)-mevalonate biosynthesis; (R)-mevalonate from acetyl-CoA: step 1/3. Its function is as follows. Catalyzes the condensation of two molecules of acetyl-CoA to produce acetoacetyl-CoA. Generates the bulk of the acetoacetyl-CoA precursor required for the cytosol-localized, mevalonate-derived isoprenoid biosynthesis. The generated isoprenoids are required for normal growth and development. Essential protein during embryogenesis. This Arabidopsis thaliana (Mouse-ear cress) protein is Acetyl-CoA acetyltransferase 2.